The sequence spans 407 residues: Imidazolonepropionase (407 aa).

Fe(3+)-binding residues include His74 and His76. Zn(2+)-binding residues include His74 and His76. 4-imidazolone-5-propanoate-binding residues include Arg83, Tyr146, and His179. N-formimidoyl-L-glutamate is bound at residue Tyr146. His244 contacts Fe(3+). His244 lines the Zn(2+) pocket. Gln247 provides a ligand contact to 4-imidazolone-5-propanoate. A Fe(3+)-binding site is contributed by Asp319. Asp319 serves as a coordination point for Zn(2+). Positions 321 and 323 each coordinate N-formimidoyl-L-glutamate. Thr324 is a binding site for 4-imidazolone-5-propanoate.

It belongs to the metallo-dependent hydrolases superfamily. HutI family. Zn(2+) is required as a cofactor. Fe(3+) serves as cofactor.

The protein resides in the cytoplasm. It catalyses the reaction 4-imidazolone-5-propanoate + H2O = N-formimidoyl-L-glutamate. The protein operates within amino-acid degradation; L-histidine degradation into L-glutamate; N-formimidoyl-L-glutamate from L-histidine: step 3/3. Its function is as follows. Catalyzes the hydrolytic cleavage of the carbon-nitrogen bond in imidazolone-5-propanoate to yield N-formimidoyl-L-glutamate. It is the third step in the universal histidine degradation pathway. The protein is Imidazolonepropionase of Salmonella agona (strain SL483).